The primary structure comprises 656 residues: Pheromone-regulated membrane protein 2 (656 aa).

The next 4 helical transmembrane spans lie at 16–36, 320–340, 422–442, and 634–654; these read FFSCIFHPLLLIFFTSVILTI, IIFTVMYFAFVILLMAIERIL, WIISNGAHLWLFGFLMLLIHW, and WGLLAVCLTILFHHMLIFIIL.

It localises to the membrane. The polypeptide is Pheromone-regulated membrane protein 2 (PRM2) (Saccharomyces cerevisiae (strain ATCC 204508 / S288c) (Baker's yeast)).